We begin with the raw amino-acid sequence, 293 residues long: Foldase protein PrsA 2 (293 aa).

Positions 1–20 (MKKKLILGLVMMMALFSLAA) are cleaved as a signal peptide. Cys21 carries the N-palmitoyl cysteine lipid modification. Cys21 carries S-diacylglycerol cysteine lipidation. A PpiC domain is found at 135-226 (QPDITVSHIL…YGYHIIQMDK (92 aa)).

The protein belongs to the PrsA family.

It localises to the cell membrane. It catalyses the reaction [protein]-peptidylproline (omega=180) = [protein]-peptidylproline (omega=0). In terms of biological role, plays a major role in protein secretion by helping the post-translocational extracellular folding of several secreted proteins. This chain is Foldase protein PrsA 2, found in Listeria monocytogenes serotype 4b (strain F2365).